Reading from the N-terminus, the 114-residue chain is Evasin-1 (114 aa).

An N-terminal signal peptide occupies residues 1 to 20; sequence MTFKACIAIITALCAMQVIC. Disulfide bonds link C32–C53, C49–C90, C66–C95, and C85–C104. 3 N-linked (GlcNAc...) asparagine glycosylation sites follow: N39, N54, and N62.

It belongs to the evasin C8 family. Monomer.

The protein resides in the secreted. In terms of biological role, salivary chemokine-binding protein which shows chemokine neutralizing activity and binds to host chemokines CCL3, CCL4 and CCL18. Binds to CCL3 with 1:1 stoichiometry. This Rhipicephalus sanguineus (Brown dog tick) protein is Evasin-1.